A 196-amino-acid chain; its full sequence is uncharacterized protein (196 aa).

The span at 122-135 (SEIEKKQEPIERKT) shows a compositional bias: basic and acidic residues. The tract at residues 122–150 (SEIEKKQEPIERKTSTTTNTESNQEKPLR) is disordered.

This is an uncharacterized protein from Leptospira interrogans.